Consider the following 324-residue polypeptide: Hydroxyacylglutathione hydrolase 2, mitochondrial (324 aa).

A mitochondrion-targeting transit peptide spans 1–64; the sequence is MQTISKASSA…KSIRVSKFCS (64 aa). Zn(2+)-binding residues include histidine 124 and histidine 126. Fe cation-binding residues include aspartate 128 and histidine 129. Zn(2+) is bound by residues histidine 182 and aspartate 201. Aspartate 201 and histidine 239 together coordinate Fe cation.

The protein belongs to the metallo-beta-lactamase superfamily. Glyoxalase II family. In terms of assembly, monomer. Fe(3+) is required as a cofactor. Fe(2+) serves as cofactor. Requires Zn(2+) as cofactor.

Its subcellular location is the mitochondrion. The enzyme catalyses an S-(2-hydroxyacyl)glutathione + H2O = a 2-hydroxy carboxylate + glutathione + H(+). It participates in secondary metabolite metabolism; methylglyoxal degradation; (R)-lactate from methylglyoxal: step 2/2. Functionally, thiolesterase that catalyzes the hydrolysis of S-D-lactoyl-glutathione to form glutathione and D-lactic acid. The polypeptide is Hydroxyacylglutathione hydrolase 2, mitochondrial (Arabidopsis thaliana (Mouse-ear cress)).